A 495-amino-acid polypeptide reads, in one-letter code: Glucose-6-phosphate 1-dehydrogenase (495 aa).

Ser-1 bears the N-acetylserine mark. NADP(+)-binding positions include 15 to 22 (GASGDLAR), Arg-49, and Lys-149. D-glucose 6-phosphate is bound by residues Lys-149, 179–183 (HYLGK), Glu-217, and Asp-236. The active-site Proton acceptor is His-241. Arg-332 lines the NADP(+) pocket. Lys-335 contributes to the D-glucose 6-phosphate binding site. The NADP(+) site is built by Lys-341, Arg-345, and Arg-367. Gln-369 contacts D-glucose 6-phosphate. NADP(+)-binding positions include 375–377 (YLK), 395–397 (DLT), and Lys-463.

This sequence belongs to the glucose-6-phosphate dehydrogenase family.

The enzyme catalyses D-glucose 6-phosphate + NADP(+) = 6-phospho-D-glucono-1,5-lactone + NADPH + H(+). It participates in carbohydrate degradation; pentose phosphate pathway; D-ribulose 5-phosphate from D-glucose 6-phosphate (oxidative stage): step 1/3. Functionally, catalyzes the rate-limiting step of the oxidative pentose-phosphate pathway, which represents a route for the dissimilation of carbohydrates besides glycolysis. The main function of this enzyme is to provide reducing power (NADPH) and pentose phosphates for fatty acid and nucleic acid synthesis. This chain is Glucose-6-phosphate 1-dehydrogenase, found in Cyberlindnera jadinii (Torula yeast).